A 1517-amino-acid chain; its full sequence is uncharacterized protein (1517 aa).

Over residues 1–13 the composition is skewed to polar residues; the sequence is MNQFPNQPGNFGQ. Residues 1-26 form a disordered region; that stretch reads MNQFPNQPGNFGQNYYKPVQGSIPAN. N-linked (GlcNAc...) asparagine glycosylation is found at Asn35, Asn40, and Asn76. 5 consecutive transmembrane segments (helical) span residues 231–251, 397–417, 510–530, 612–632, and 720–740; these read AIDF…AVPI, AIGL…TVWC, FVPL…KDWI, PNIV…FFAL, and VFDC…VVLL. An N-linked (GlcNAc...) asparagine glycan is attached at Asn917. Helical transmembrane passes span 956–976, 985–1005, 1051–1071, and 1114–1134; these read FVYA…VPPL, VPAF…VNSE, VKLD…AFWS, and GIGF…TYLL. The N-linked (GlcNAc...) asparagine glycan is linked to Asn1178. Residues 1261-1281 form a helical membrane-spanning segment; that stretch reads PYALPLLDSGMVPVSTQLAIV. Asn1321 carries an N-linked (GlcNAc...) asparagine glycan. 2 consecutive transmembrane segments (helical) span residues 1353–1373 and 1408–1428; these read APVV…TFEV and VVVV…PVVI.

To S.pombe SpAC22F3.04.

The protein resides in the membrane. This is an uncharacterized protein from Schizosaccharomyces pombe (strain 972 / ATCC 24843) (Fission yeast).